We begin with the raw amino-acid sequence, 354 residues long: uncharacterized protein (354 aa).

This sequence belongs to the asfivirus B354L family.

This is an uncharacterized protein from Ornithodoros (relapsing fever ticks).